The chain runs to 1663 residues: Cortactin-binding protein 2 (1663 aa).

Disordered stretches follow at residues 1-23 (MATD…AGAA), 203-222 (KKKT…RSTE), 358-440 (RQAS…LHPG), and 454-479 (GNAN…PTSR). Positions 119 to 276 (KKMQERMSAQ…EQLKRGSDSK (158 aa)) form a coiled coil. Over residues 386-396 (PSTDSTPDPTS) the composition is skewed to low complexity. Over residues 411–422 (QTPGIAPQNSQA) the composition is skewed to polar residues. An Asymmetric dimethylarginine modification is found at arginine 498. Residues 499-616 (FTSPQAGAPS…SSPQLPPKPS (118 aa)) are disordered. Residues 583–593 (TVASPPSSLPQ) are compositionally biased toward polar residues. ANK repeat units lie at residues 709–739 (GRPT…DINY), 743–772 (DGHS…QINA), 776–805 (NGFT…NINH), 809–838 (GGQT…NRSV), 842–871 (DGWT…PACG), and 912–942 (EGWT…EPER). The segment at 1446-1477 (NKKKGESGAWRKVNTSPRRKSGRFSLPTWNKP) is disordered. At serine 1524 the chain carries Phosphoserine. Disordered regions lie at residues 1580–1602 (SQKE…KSKT) and 1618–1663 (SKVT…KPNK). Residues 1582–1599 (KEVSPLSSHQTTECSNSK) show a composition bias toward polar residues. Residues 1624–1638 (SQNTKRSSSSSNTRQ) are compositionally biased toward low complexity. Residues 1645–1663 (SKKENWNLHKNEHLDKPNK) are compositionally biased toward basic and acidic residues.

Interacts with CTTN/cortactin SH3 domain. Interacts with STRN, STRN4/zinedin and MOB4/phocein; this interactions mediate the association with the STRIPAK core complex and may regulate dendritic spine distribution of the STRIPAK complex in hippocampal neurons. Activation of glutamate receptors weakens the interaction with STRN and STRN4.

It is found in the cytoplasm. The protein localises to the cell cortex. The protein resides in the cell projection. It localises to the dendritic spine. Regulates the dendritic spine distribution of CTTN/cortactin in hippocampal neurons, and thus controls dendritic spinogenesis and dendritic spine maintenance. Associates with the striatin-interacting phosphatase and kinase (STRIPAK) core complex to regulate dendritic spine distribution of the STRIPAK complex in hippocampal neurons. This Colobus guereza (Mantled guereza) protein is Cortactin-binding protein 2 (CTTNBP2).